We begin with the raw amino-acid sequence, 398 residues long: Flavin-containing monooxygenase ustF1 (398 aa).

A signal peptide spans 1–22 (MTVSQVRRVAVIGAGISGVVST). 13–18 (GAGISG) contributes to the FAD binding site. Residues N53, N57, N119, and N126 are each glycosylated (N-linked (GlcNAc...) asparagine). Residue 194–199 (GGGVSS) participates in NADP(+) binding. N-linked (GlcNAc...) asparagine glycans are attached at residues N236, N243, and N271.

This sequence belongs to the FMO family.

It functions in the pathway mycotoxin biosynthesis. Functionally, flavin-containing monooxygenase; part of the gene cluster that mediates the biosynthesis of the secondary metabolite ustiloxin B, an antimitotic tetrapeptide. First, ustA is processed by the subtilisin-like endoprotease Kex2 that is outside the ustiloxin B gene cluster, at the C-terminal side of Arg-Lys, after transfer to Golgi apparatus through the endoplasmic reticulum (ER). Cleavage by KEX2 generates 16 peptides YAIG-I to YAIG-XVI. To process the precursor peptide further, at least two peptidases are necessary to cleave the N-terminal and C-terminal sides of the Tyr-Ala-Ile-Gly core peptide which serves as backbone for the synthesis of ustiloxin B, through cyclization and modification of the tyrosine with a non-protein coding amino acid, norvaline. One of the two peptidases must be the serine peptidase ustP; and the other pepdidase is probably ustH. Macrocyclization of the core peptide derived from ustA requires the tyrosinase ustQ, as well as the homologous oxidases ustYa and ustYb, and leads to the production of the first cyclization product N-desmethylustiloxin F. For the formation of N-desmethylustiloxin F, three oxidation steps are required, hydroxylation at the benzylic position, hydroxylation at either the aromatic ring of Tyr or beta-position of Ile, and oxidative cyclization. UstQ may catalyze the oxidation of a phenol moiety, whereas the ustYa and ustYb are most likely responsible for the remaining two-step oxidations. N-desmethylustiloxin F is then methylated by ustM to yield ustiloxin F which in turn substrate of the cytochrome P450 monooxygenase ustC which catalyzes the formation of S-deoxyustiloxin H. The flavoprotein monooxygenases ustF1 and ustF2 then participate in the modification of the side chain of S-deoxyustiloxin H, leading to the synthesis of an oxime intermediate, via ustiloxin H. Finally, carboxylative dehydration performed by the cysteine desulfurase-like protein ustD yields ustiloxin B. This chain is Flavin-containing monooxygenase ustF1, found in Aspergillus flavus (strain ATCC 200026 / FGSC A1120 / IAM 13836 / NRRL 3357 / JCM 12722 / SRRC 167).